Here is a 370-residue protein sequence, read N- to C-terminus: tRNA 2-selenouridine synthase (370 aa).

Residues 12–136 enclose the Rhodanese domain; the sequence is FLDDVPMMDM…MRTFLLETTQ (125 aa). Residue Cys-95 is the S-selanylcysteine intermediate of the active site.

Belongs to the SelU family. In terms of assembly, monomer.

The enzyme catalyses 5-methylaminomethyl-2-thiouridine(34) in tRNA + selenophosphate + (2E)-geranyl diphosphate + H2O + H(+) = 5-methylaminomethyl-2-selenouridine(34) in tRNA + (2E)-thiogeraniol + phosphate + diphosphate. It carries out the reaction 5-methylaminomethyl-2-thiouridine(34) in tRNA + (2E)-geranyl diphosphate = 5-methylaminomethyl-S-(2E)-geranyl-thiouridine(34) in tRNA + diphosphate. The catalysed reaction is 5-methylaminomethyl-S-(2E)-geranyl-thiouridine(34) in tRNA + selenophosphate + H(+) = 5-methylaminomethyl-2-(Se-phospho)selenouridine(34) in tRNA + (2E)-thiogeraniol. It catalyses the reaction 5-methylaminomethyl-2-(Se-phospho)selenouridine(34) in tRNA + H2O = 5-methylaminomethyl-2-selenouridine(34) in tRNA + phosphate. In terms of biological role, involved in the post-transcriptional modification of the uridine at the wobble position (U34) of tRNA(Lys), tRNA(Glu) and tRNA(Gln). Catalyzes the conversion of 2-thiouridine (S2U-RNA) to 2-selenouridine (Se2U-RNA). Acts in a two-step process involving geranylation of 2-thiouridine (S2U) to S-geranyl-2-thiouridine (geS2U) and subsequent selenation of the latter derivative to 2-selenouridine (Se2U) in the tRNA chain. The protein is tRNA 2-selenouridine synthase of Pseudomonas putida (strain ATCC 47054 / DSM 6125 / CFBP 8728 / NCIMB 11950 / KT2440).